The primary structure comprises 339 residues: Transcription initiation factor IIB (339 aa).

Residues Glu39–Gln70 form a TFIIB-type zinc finger. Residues Cys43, Cys46, Cys62, and Cys65 each contribute to the Zn(2+) site. Repeat copies occupy residues Ser156–Leu239 and Asp250–Glu331.

The protein belongs to the TFIIB family.

In terms of biological role, stabilizes TBP binding to an archaeal box-A promoter. Also responsible for recruiting RNA polymerase II to the pre-initiation complex (DNA-TBP-TFIIB). This Methanothermococcus thermolithotrophicus (Methanococcus thermolithotrophicus) protein is Transcription initiation factor IIB.